Reading from the N-terminus, the 108-residue chain is Evasin P1156 (108 aa).

The first 28 residues, 1 to 28 (MEVKTYAFLQIAVFIFLGMQIFASLTDA), serve as a signal peptide directing secretion. Intrachain disulfides connect Cys41-Cys63, Cys45-Cys65, and Cys56-Cys76. Asn44 carries N-linked (GlcNAc...) asparagine glycosylation. The interval 89 to 108 (NPSDSEIEAAKPKRSDTLSH) is disordered. The span at 96–108 (EAAKPKRSDTLSH) shows a compositional bias: basic and acidic residues.

It is found in the secreted. In terms of biological role, salivary chemokine-binding protein which has chemokine-neutralizing activity and binds to host chemokines CXCL1, CXCL2, CXCL3, CXCL5, CXCL6 and CXCL8. This is Evasin P1156 from Ixodes ricinus (Common tick).